The primary structure comprises 318 residues: Olfactory receptor 2T3 (318 aa).

At 1-30 the chain is on the extracellular side; that stretch reads MCSGNQTSQNQTASTDFTLTGLFAESKHAA. N-linked (GlcNAc...) asparagine glycans are attached at residues Asn-5 and Asn-10. A helical membrane pass occupies residues 31-54; that stretch reads LLYTVTFLLFLMALTGNALLILLI. At 55 to 62 the chain is on the cytoplasmic side; sequence HSEPRLHT. A helical membrane pass occupies residues 63-84; the sequence is PMYFFISQLALMDLMYLCVTVP. The Extracellular portion of the chain corresponds to 85–105; it reads KMLVGQVTGDDTISPSGCGIQ. Cys-102 and Cys-194 are oxidised to a cystine. A helical membrane pass occupies residues 106–125; the sequence is MFFYLTLAGAEVFLLAAMAY. The Cytoplasmic portion of the chain corresponds to 126-144; it reads DRYAAVCRPLHYPLLMNQR. Residues 145 to 163 form a helical membrane-spanning segment; that stretch reads VCQLLVSACWVLGMVDGLL. The Extracellular segment spans residues 164 to 200; that stretch reads LTPITMSFPFCQSRKILSFFCETPALLKLSCSDVSLY. A helical transmembrane segment spans residues 201-224; the sequence is KTLMYLCCILMLLAPIMVISSSYT. Topologically, residues 225 to 241 are cytoplasmic; sequence LILHLIHRMNSAAGHRK. Residues 242-264 traverse the membrane as a helical segment; that stretch reads ALATCSSHMIIVLLLFGASFYTY. The Extracellular segment spans residues 265 to 277; it reads MLPSSYHTAEQDM. Residues 278–297 form a helical membrane-spanning segment; that stretch reads MVSAFYTIFTPVLNPLIYSL. Residues 298 to 318 lie on the Cytoplasmic side of the membrane; sequence RNKDVTRALRSMMQSRMNQEK.

This sequence belongs to the G-protein coupled receptor 1 family.

Its subcellular location is the cell membrane. Functionally, odorant receptor. The chain is Olfactory receptor 2T3 (OR2T3) from Homo sapiens (Human).